The following is a 775-amino-acid chain: Isopimaradiene synthase (775 aa).

The N-terminal 36 residues, 1–36, are a transit peptide targeting the chloroplast; sequence MFSSSLKLKTNPLMDNKIHRSSSDRDFRGSTISSVK. Mg(2+) contacts are provided by Asp525, Asp529, Asn669, Gln672, and Glu677. The DDXXD motif signature appears at 525–529; sequence DDFFD.

Belongs to the terpene synthase family. It depends on Mg(2+) as a cofactor. As to expression, ubiquitous expression in roots, stems, leaves and flowers.

It is found in the plastid. Its subcellular location is the chloroplast. The catalysed reaction is (+)-copalyl diphosphate = isopimara-8(14),15-diene + diphosphate. The protein operates within secondary metabolite biosynthesis; terpenoid biosynthesis. Functionally, involved in the biosynthesis of ent-kaurene diterpenoids natural products such as oridonin, miltiradiene, eriocalyxin B and nezukol, known to exhibit antitumor, anti-inflammatory and antibacterial activities. Catalyzes the conversion of (+)-copalyl diphosphate ((+)-CPP) to isopimaradiene. This chain is Isopimaradiene synthase, found in Isodon rubescens (Rabdosia rubescens).